The chain runs to 541 residues: Serine/threonine-protein kinase akt-1 (541 aa).

Residues 15-118 (DVVIEGWLHK…WIHAIESISK (104 aa)) form the PH domain. A Protein kinase domain is found at 193 to 450 (FDFLKVLGKG…ALEICRADFF (258 aa)). Residues 199 to 207 (LGKGTFGKV) and Lys222 contribute to the ATP site. Asp316 acts as the Proton acceptor in catalysis. Thr350 bears the Phosphothreonine mark. Residues 451–528 (RTVDWEATYR…HNVMGSINRI (78 aa)) form the AGC-kinase C-terminal domain. A Phosphoserine modification is found at Ser517.

It belongs to the protein kinase superfamily. AGC Ser/Thr protein kinase family. RAC subfamily. In terms of assembly, interacts with pdk-1, sgk-1, akt-2 and daf-16. Part of a complex containing sgk-1, akt-1 and akt-2. Interacts with cmd-1 in the presence of Ca(2+). Interacts with let-92 phosphatase regulatory subunit pptr-1. Mg(2+) is required as a cofactor. In terms of tissue distribution, expressed in neurons, muscle cells of the pharynx, rectal gland cells, vulva and spermatheca.

It carries out the reaction L-seryl-[protein] + ATP = O-phospho-L-seryl-[protein] + ADP + H(+). The catalysed reaction is L-threonyl-[protein] + ATP = O-phospho-L-threonyl-[protein] + ADP + H(+). Phosphorylated and activated by pdk-1. Acts downstream of PI3 kinase age-1 and kinase pdk-1 in the daf-2/insulin receptor-like transduction pathway. Phosphorylates Forkhead-related daf-16 and the longevity-promoting skn-1 transcription factors, which inhibits their entry into the nucleus and antagonizes their functions. Plays a role in maintaining the gonadal basement membrane through it's role in inhibiting daf-16 activity. Has an essential role in regulating developmental arrest at the dauer stage. Plays a role in immune function and pathogen resistance. Regulates salt chemotaxis learning. Downstream of age-1 and together with akt-2 and sgk-1, promotes cell survival during embryonic development. The protein is Serine/threonine-protein kinase akt-1 of Caenorhabditis elegans.